The following is a 360-amino-acid chain: MSHTASTPTPEEYSAQQPSTQGTRVEFRGITKVFSNNKSAKTTALDNVTLTVEPGEVIGIIGYSGAGKSTLVRLINGLDSPTSGSLLLNGTDIVGMPESKLRKLRSNIGMIFQQFNLFQSRTAAGNVEYPLEVAKMDKAARKARVQEMLEFVGLGDKGKNYPEQLSGGQKQRVGIARALATNPTLLLADEATSALDPETTHEVLELLRKVNRELGITIVVITHEMEVVRSIADKVAVMESGKVVEYGSVYEVFSNPQTQVAQKFVATALRNTPDQVESEDLLSHEGRLFTIDLTETSGFFAATARAAEQGAFVNIVHGGVTTLQRQSFGKMTVRLTGNTAAIEEFYQTLTKTTTIKEITR.

A disordered region spans residues 1 to 22; sequence MSHTASTPTPEEYSAQQPSTQG. Positions 25 to 265 constitute an ABC transporter domain; it reads VEFRGITKVF…PQTQVAQKFV (241 aa). An ATP-binding site is contributed by 62–69; the sequence is GYSGAGKS.

Belongs to the ABC transporter superfamily. Methionine importer (TC 3.A.1.24) family. The complex is composed of two ATP-binding proteins (MetN), two transmembrane proteins (MetI) and a solute-binding protein (MetQ).

The protein resides in the cell membrane. The catalysed reaction is L-methionine(out) + ATP + H2O = L-methionine(in) + ADP + phosphate + H(+). It catalyses the reaction D-methionine(out) + ATP + H2O = D-methionine(in) + ADP + phosphate + H(+). Functionally, part of the ABC transporter complex MetNIQ involved in methionine import. Responsible for energy coupling to the transport system. This chain is Methionine import ATP-binding protein MetN, found in Corynebacterium glutamicum (strain ATCC 13032 / DSM 20300 / JCM 1318 / BCRC 11384 / CCUG 27702 / LMG 3730 / NBRC 12168 / NCIMB 10025 / NRRL B-2784 / 534).